We begin with the raw amino-acid sequence, 204 residues long: uncharacterized protein (204 aa).

The stretch at 109 to 136 (QFDIDVHKDQIEKLKDLYKALLRIAETT) forms a coiled coil.

This is an uncharacterized protein from Bacillus subtilis (strain 168).